We begin with the raw amino-acid sequence, 475 residues long: Bifunctional protein HldE (475 aa).

Positions 1 to 318 are ribokinase; that stretch reads MKITLPEFEK…ANALYTEQET (318 aa). Position 195 to 198 (195 to 198) interacts with ATP; that stretch reads NMSE. The active site involves Asp-264. The segment at 344-475 is cytidylyltransferase; sequence MTNGCFDILH…DIIKTIRERG (132 aa).

The protein in the N-terminal section; belongs to the carbohydrate kinase PfkB family. In the C-terminal section; belongs to the cytidylyltransferase family. In terms of assembly, homodimer.

The catalysed reaction is D-glycero-beta-D-manno-heptose 7-phosphate + ATP = D-glycero-beta-D-manno-heptose 1,7-bisphosphate + ADP + H(+). It catalyses the reaction D-glycero-beta-D-manno-heptose 1-phosphate + ATP + H(+) = ADP-D-glycero-beta-D-manno-heptose + diphosphate. The protein operates within nucleotide-sugar biosynthesis; ADP-L-glycero-beta-D-manno-heptose biosynthesis; ADP-L-glycero-beta-D-manno-heptose from D-glycero-beta-D-manno-heptose 7-phosphate: step 1/4. Its pathway is nucleotide-sugar biosynthesis; ADP-L-glycero-beta-D-manno-heptose biosynthesis; ADP-L-glycero-beta-D-manno-heptose from D-glycero-beta-D-manno-heptose 7-phosphate: step 3/4. Catalyzes the phosphorylation of D-glycero-D-manno-heptose 7-phosphate at the C-1 position to selectively form D-glycero-beta-D-manno-heptose-1,7-bisphosphate. In terms of biological role, catalyzes the ADP transfer from ATP to D-glycero-beta-D-manno-heptose 1-phosphate, yielding ADP-D-glycero-beta-D-manno-heptose. In Aeromonas hydrophila subsp. hydrophila (strain ATCC 7966 / DSM 30187 / BCRC 13018 / CCUG 14551 / JCM 1027 / KCTC 2358 / NCIMB 9240 / NCTC 8049), this protein is Bifunctional protein HldE.